We begin with the raw amino-acid sequence, 207 residues long: Transcription factor bHLH149 (207 aa).

The disordered stretch occupies residues 1–25 (MVESLFPSIENTGESSRRKKPRISE). Positions 132-181 (KSRKGLTETNRIKLPAVERKLKILGRLVPGCRKVSVPNLLDEATDYIAAL) constitute a bHLH domain.

Homodimer. Interacts with PRE3.

Its subcellular location is the nucleus. Its function is as follows. Atypical bHLH transcription factor probably unable to bind DNA. Negatively regulates brassinosteroid signaling. This is Transcription factor bHLH149 (BHLH149) from Arabidopsis thaliana (Mouse-ear cress).